The following is a 77-amino-acid chain: Ubiquitin-like protein NEDD8 (77 aa).

Residues 70-72 (VLA) are interaction with uba-3. Glycine 76 is covalently cross-linked (Glycyl lysine isopeptide (Gly-Lys) (interchain with K-? in acceptor proteins)). A propeptide is located at residue phenylalanine 77.

This sequence belongs to the ubiquitin family. As to quaternary structure, interacts with dcn-1. Covalently attached to cullins. May interact with atx-3. Post-translationally, cleavage of precursor form is necessary for function.

It is found in the nucleus. The protein resides in the cytoplasm. In terms of biological role, ubiquitin-like protein which plays an important role in cell cycle control and embryogenesis. Covalent attachment to its substrates requires prior activation by the E1 complex uba-3-ula-1 and linkage to the E2 enzyme ubc-12. Attachment of ned-8 to cullins activates their associated E3 ubiquitin ligase activity, and thus promotes polyubiquitination and proteasomal degradation of cyclins and other regulatory proteins. The chain is Ubiquitin-like protein NEDD8 (ned-8) from Caenorhabditis elegans.